Reading from the N-terminus, the 579-residue chain is Nuclear receptor coactivator 5 (579 aa).

An N-acetylmethionine modification is found at methionine 1. A disordered region spans residues 1–77 (MNTAPSRPSP…DIRDHRDSRS (77 aa)). The transcription repression stretch occupies residues 1 to 158 (MNTAPSRPSP…RDSFDGRGPP (158 aa)). Residue threonine 3 is modified to Phosphothreonine. A phosphoserine mark is found at serine 9, serine 21, serine 29, serine 34, serine 96, serine 116, serine 126, serine 143, and serine 151. Positions 11 to 77 (TRRDPYSFGD…DIRDHRDSRS (67 aa)) are enriched in basic and acidic residues. The tract at residues 148–172 (YRDSFDGRGPPGPESQSRAKERLKR) is disordered. Threonine 274 carries the phosphothreonine modification. The LXXLL motif motif lies at 345–349 (LINLL). 2 positions are modified to phosphoserine: serine 378 and serine 381. 2 disordered regions span residues 378–428 (SADS…PTSQ) and 446–529 (ANSS…RPVS). Composition is skewed to low complexity over residues 395-420 (SGSS…ATPT) and 446-460 (ANSS…TGSS). Residues 458 to 579 (GSSQNQNFST…APMGSYQRHY (122 aa)) form a transcription activation region. Residues 461–485 (QNQNFSTAANSQPQQRPQASGNQPP) are compositionally biased toward polar residues.

As to quaternary structure, binds HTATIP2/TIP30. Interacts with YLPM1. Forms a complex with ILF2, ILF3, YLPM1, KHDRBS1, RBMX and PPP1CA.

The protein localises to the nucleus. In terms of biological role, nuclear receptor coregulator that can have both coactivator and corepressor functions. Interacts with nuclear receptors for steroids (ESR1 and ESR2) independently of the steroid binding domain (AF-2) of the ESR receptors, and with the orphan nuclear receptor NR1D2. Involved in the coactivation of nuclear steroid receptors (ER) as well as the corepression of MYC in response to 17-beta-estradiol (E2). This Mus musculus (Mouse) protein is Nuclear receptor coactivator 5 (Ncoa5).